The primary structure comprises 63 residues: uncharacterized protein (63 aa).

This is an uncharacterized protein from Vaccinia virus (strain Western Reserve) (VACV).